We begin with the raw amino-acid sequence, 544 residues long: Chaperonin GroEL (544 aa).

ATP-binding positions include 30 to 33, Lys-51, 87 to 91, Gly-415, and Asp-495; these read TLGP and DGTTT.

Belongs to the chaperonin (HSP60) family. As to quaternary structure, forms a cylinder of 14 subunits composed of two heptameric rings stacked back-to-back. Interacts with the co-chaperonin GroES.

Its subcellular location is the cytoplasm. The catalysed reaction is ATP + H2O + a folded polypeptide = ADP + phosphate + an unfolded polypeptide.. Its function is as follows. Together with its co-chaperonin GroES, plays an essential role in assisting protein folding. The GroEL-GroES system forms a nano-cage that allows encapsulation of the non-native substrate proteins and provides a physical environment optimized to promote and accelerate protein folding. This is Chaperonin GroEL from Methylobacillus flagellatus (strain ATCC 51484 / DSM 6875 / VKM B-1610 / KT).